The chain runs to 129 residues: Small ribosomal subunit protein uS11 (129 aa).

This sequence belongs to the universal ribosomal protein uS11 family. In terms of assembly, part of the 30S ribosomal subunit. Interacts with proteins S7 and S18. Binds to IF-3.

Functionally, located on the platform of the 30S subunit, it bridges several disparate RNA helices of the 16S rRNA. Forms part of the Shine-Dalgarno cleft in the 70S ribosome. In Histophilus somni (strain 129Pt) (Haemophilus somnus), this protein is Small ribosomal subunit protein uS11.